Reading from the N-terminus, the 323-residue chain is Phosphatidylethanolamine:ceramide ethanolaminephosphotransferase (323 aa).

The Cytoplasmic portion of the chain corresponds to 1–26 (MAVPPVEMYSGSFWNRMRKPLPLRTQ). The helical transmembrane segment at 27-47 (VIRFTVVFVIVSFILAVALQI) threads the bilayer. The Extracellular segment spans residues 48 to 73 (THERMPDPKVTKPLPDLGFEVLHKYP). The chain crosses the membrane as a helical span at residues 74–94 (FLFSVADCCIGFLNILSVFTA). Over 95–147 (FKLYLLHRHCVGSGEPELPCNIPGVSRFFLSVWLCKENCRIELRNVHTIAWIR) the chain is Cytoplasmic. The helical transmembrane segment at 148-168 (FITSYALLLLSRSVIMVVTSL) threads the bilayer. Residues 169-211 (PNPDDLCQDPPKIENRVKDVILTVLTAGAGSIHCGDLMYSGHT) are Extracellular-facing. Histidine 210 is a catalytic residue. A helical membrane pass occupies residues 212-232 (VILTLHLMFHWIYGAMVHWSF). Residue arginine 233 is a topological domain, cytoplasmic. A helical transmembrane segment spans residues 234–254 (PVVTVVAIFGYYCIVASRFHY). Active-site residues include histidine 253 and aspartate 257. The Extracellular portion of the chain corresponds to 255-257 (TDD). A helical transmembrane segment spans residues 258–278 (VLVAIYLTIATFIAVGHNADG). Residues 279 to 323 (APWQLQLFIRWLPCCGANSREVTEDGVPVAIVIKNEEMMNFEGKS) lie on the Cytoplasmic side of the membrane.

This sequence belongs to the sphingomyelin synthase family.

The protein localises to the membrane. In terms of biological role, bidirectional lipid ethanolaminephosphotransferase capable of converting phosphatidylethanolamine (PE) and ceramide to ethanolamine-phosphorylceramide (EPC) and diacylglycerol (DAG) and vice versa. Direction is dependent on the relative concentrations of DAG and ceramide as phosphoethanolamine acceptors. Does not function strictly as a SM synthase. Essential for viability of the pathogenic bloodstream stage of this human protozoan parasite and, consequently, can be considered as potential drug target. This is Phosphatidylethanolamine:ceramide ethanolaminephosphotransferase from Trypanosoma brucei brucei (strain 927/4 GUTat10.1).